Consider the following 171-residue polypeptide: Adenine phosphoribosyltransferase (171 aa).

This sequence belongs to the purine/pyrimidine phosphoribosyltransferase family. As to quaternary structure, homodimer.

It is found in the cytoplasm. It carries out the reaction AMP + diphosphate = 5-phospho-alpha-D-ribose 1-diphosphate + adenine. The protein operates within purine metabolism; AMP biosynthesis via salvage pathway; AMP from adenine: step 1/1. Catalyzes a salvage reaction resulting in the formation of AMP, that is energically less costly than de novo synthesis. This Acetivibrio thermocellus (strain ATCC 27405 / DSM 1237 / JCM 9322 / NBRC 103400 / NCIMB 10682 / NRRL B-4536 / VPI 7372) (Clostridium thermocellum) protein is Adenine phosphoribosyltransferase.